A 255-amino-acid polypeptide reads, in one-letter code: 14-3-3 protein epsilon (255 aa).

An N-acetylmethionine modification is found at M1. An N6-acetyllysine; alternate modification is found at K50. K50 is covalently cross-linked (Glycyl lysine isopeptide (Lys-Gly) (interchain with G-Cter in SUMO2); alternate). A Phosphoserine modification is found at S65. An N6-acetyllysine mark is found at K69, K118, and K123. The residue at position 131 (Y131) is a Phosphotyrosine. T137 is modified (phosphothreonine). The residue at position 210 (S210) is a Phosphoserine. Phosphothreonine is present on T232. A disordered region spans residues 234–255; that stretch reads DMQGDGEEQNKEALQDVEDENQ.

The protein belongs to the 14-3-3 family. As to quaternary structure, homodimer. Heterodimerizes with YWHAZ. Interacts with PKA-phosphorylated AANAT. Interacts with ABL1 (phosphorylated form); the interaction retains it in the cytoplasm. Interacts with ARHGEF28. Interacts with BEX3. Weakly interacts with CDKN1B. Interacts with the 'Thr-369' phosphorylated form of DAPK2. Interacts with DENND1A. Interacts with GAB2. Interacts with phosphorylated GRB10. Interacts with KSR1. Interacts with NDEL1. Interacts with PI4KB, TBC1D22A and TBC1D22B. Interacts with the phosphorylated (by AKT1) form of SRPK2. Interacts with TIAM2. Interacts with the 'Ser-1134' and 'Ser-1161' phosphorylated form of SOS1. Interacts with ZFP36 (via phosphorylated form). Interacts with SLITRK1. Interacts with HSF1 (via phosphorylated form); this interaction promotes HSF1 sequestration in the cytoplasm in a ERK-dependent manner. Interacts with RIPOR2. Interacts with KLHL22; required for the nuclear localization of KLHL22 upon amino acid starvation. Interacts with CRTC1. Interacts with CRTC2 (probably when phosphorylated at 'Ser-171'). Interacts with CRTC3 (probably when phosphorylated at 'Ser-162' and/or 'Ser-273'). Interacts with ATP2B1 and ATP2B3; this interaction inhibits calcium-transporting ATPase activity. Interacts with MEFV. Interacts with RNF115. Interacts with GPR15; this interaction promotes ER-to-Golgi transport of GPR15.

It localises to the nucleus. It is found in the cytoplasm. Its subcellular location is the melanosome. Adapter protein implicated in the regulation of a large spectrum of both general and specialized signaling pathways. Binds to a large number of partners, usually by recognition of a phosphoserine or phosphothreonine motif. Binding generally results in the modulation of the activity of the binding partner. Positively regulates phosphorylated protein HSF1 nuclear export to the cytoplasm. In Rattus norvegicus (Rat), this protein is 14-3-3 protein epsilon (Ywhae).